The sequence spans 204 residues: General stress protein Ctc (204 aa).

The interval 177–204 is disordered; that stretch reads ILPPQQQEAAEVDEEESADAQPEGENEQ. Acidic residues predominate over residues 186 to 204; that stretch reads AEVDEEESADAQPEGENEQ.

Belongs to the bacterial ribosomal protein bL25 family. CTC subfamily. As to quaternary structure, part of the ribosome (presumably the 50S subunit) under heat-stress but not control growth conditions. Binds 5S rRNA.

Not required for exponential growth; probably functions in vegetatively growing cells, maybe required for accurate translation under stress conditions. The sequence is that of General stress protein Ctc from Bacillus subtilis (strain 168).